We begin with the raw amino-acid sequence, 383 residues long: V-type proton ATPase subunit C 1-A (383 aa).

Residue Thr2 is modified to N-acetylthreonine.

The protein belongs to the V-ATPase C subunit family. In terms of assembly, V-ATPase is a heteromultimeric enzyme made up of two complexes: the ATP-hydrolytic V1 complex and the proton translocation V0 complex. The V1 complex consists of three catalytic AB heterodimers that form a heterohexamer, three peripheral stalks each consisting of EG heterodimers, one central rotor including subunits D and F, and the regulatory subunits C and H. The proton translocation complex V0 consists of the proton transport subunit a, a ring of proteolipid subunits c9c'', rotary subunit d, subunits e and f, and two accessory subunits.

In terms of biological role, subunit of the V1 complex of vacuolar(H+)-ATPase (V-ATPase), a multisubunit enzyme composed of a peripheral complex (V1) that hydrolyzes ATP and a membrane integral complex (V0) that translocates protons. V-ATPase is responsible for acidifying and maintaining the pH of intracellular compartments and in some cell types, is targeted to the plasma membrane, where it is responsible for acidifying the extracellular environment. Subunit C is necessary for the assembly of the catalytic sector of the enzyme and is likely to have a specific function in its catalytic activity. This is V-type proton ATPase subunit C 1-A (atp6v1c1a) from Danio rerio (Zebrafish).